The sequence spans 109 residues: Large ribosomal subunit protein uL24 (109 aa).

Belongs to the universal ribosomal protein uL24 family. As to quaternary structure, part of the 50S ribosomal subunit.

Its function is as follows. One of two assembly initiator proteins, it binds directly to the 5'-end of the 23S rRNA, where it nucleates assembly of the 50S subunit. In terms of biological role, one of the proteins that surrounds the polypeptide exit tunnel on the outside of the subunit. The chain is Large ribosomal subunit protein uL24 from Geotalea uraniireducens (strain Rf4) (Geobacter uraniireducens).